The chain runs to 374 residues: Alcohol dehydrogenase 3, mitochondrial (374 aa).

Residues 1–26 (MLRLTSARSIVSPLRKGAFGSIRTLA) constitute a mitochondrion transit peptide. Residues Cys70, His93, Cys124, Cys127, Cys130, Cys138, and Cys180 each coordinate Zn(2+). Residues 204–210 (GAAGGLG), Asp228, Lys233, 295–297 (VGL), and Arg367 contribute to the NAD(+) site.

The protein belongs to the zinc-containing alcohol dehydrogenase family. In terms of assembly, homotetramer. It depends on Zn(2+) as a cofactor.

It is found in the mitochondrion matrix. It carries out the reaction a primary alcohol + NAD(+) = an aldehyde + NADH + H(+). It catalyses the reaction a secondary alcohol + NAD(+) = a ketone + NADH + H(+). The polypeptide is Alcohol dehydrogenase 3, mitochondrial (ADH3) (Kluyveromyces lactis (strain ATCC 8585 / CBS 2359 / DSM 70799 / NBRC 1267 / NRRL Y-1140 / WM37) (Yeast)).